Here is a 611-residue protein sequence, read N- to C-terminus: Oligoendopeptidase F homolog (611 aa).

His384 is a Zn(2+) binding site. Glu385 is a catalytic residue. His388 and His391 together coordinate Zn(2+).

It belongs to the peptidase M3B family. It depends on Zn(2+) as a cofactor.

In Mycoplasma pneumoniae (strain ATCC 29342 / M129 / Subtype 1) (Mycoplasmoides pneumoniae), this protein is Oligoendopeptidase F homolog (pepF).